Here is a 198-residue protein sequence, read N- to C-terminus: CASP-like protein 2B1 (198 aa).

Topologically, residues Met1–Lys12 are cytoplasmic. A helical transmembrane segment spans residues Val13–Val33. Residues Gly34–Lys55 lie on the Extracellular side of the membrane. Residues Ala56–Ala76 form a helical membrane-spanning segment. Over Arg77 to Gly91 the chain is Cytoplasmic. Residues Ala92–Ala112 traverse the membrane as a helical segment. Over Ala113–Glu149 the chain is Extracellular. The chain crosses the membrane as a helical span at residues Gly150–Phe170. Topologically, residues Asn171–Trp198 are cytoplasmic.

The protein belongs to the Casparian strip membrane proteins (CASP) family. In terms of assembly, homodimer and heterodimers.

It localises to the cell membrane. In Oryza sativa subsp. japonica (Rice), this protein is CASP-like protein 2B1.